The following is a 265-amino-acid chain: MIKWPWKAQEITQNEDWPWDDALAIPLLVNLTAQEQARLIALAERFLQQKRLVALQGFELDSLKSARIALIFCLPILELGIEWLDGFHEVLIYPAPFVVDDEWEDDIGLVHSQRVVQSGQSWQQGPIILNWLDIQDSFDASGFNLIIHEVAHKLDMRNGDRASGIPFIPLRDVAGWEHDLHAAMNNIQDEIDLVGESAASIDAYAATDPAECFAVLSEYFFSAPELFAPRFPALWQRFCQFYRQDPSQRLRVSADEGDYGEESEH.

Residues His-111, His-148, His-152, and Glu-211 each coordinate Zn(2+).

Belongs to the MtfA family. Interacts with Mlc. The cofactor is Zn(2+).

The protein resides in the cytoplasm. In terms of biological role, involved in the modulation of the activity of the glucose-phosphotransferase system (glucose-PTS). Interacts with the transcriptional repressor Mlc, preventing its interaction with DNA and leading to the modulation of expression of genes regulated by Mlc, including ptsG, which encodes the PTS system glucose-specific EIICB component. Functionally, shows zinc-dependent metallopeptidase activity. The sequence is that of Mlc titration factor A from Salmonella paratyphi A (strain AKU_12601).